Consider the following 408-residue polypeptide: LL-diaminopimelate aminotransferase (408 aa).

Residues Y15 and G42 each contribute to the substrate site. Residues Y72, 108-109 (SK), Y132, N187, Y218, and 246-248 (SFS) contribute to the pyridoxal 5'-phosphate site. The substrate site is built by K109, Y132, and N187. Residue K249 is modified to N6-(pyridoxal phosphate)lysine. Residues R257 and N292 each contribute to the pyridoxal 5'-phosphate site. Residues N292 and R388 each coordinate substrate.

Belongs to the class-I pyridoxal-phosphate-dependent aminotransferase family. LL-diaminopimelate aminotransferase subfamily. Homodimer. Requires pyridoxal 5'-phosphate as cofactor.

It carries out the reaction (2S,6S)-2,6-diaminopimelate + 2-oxoglutarate = (S)-2,3,4,5-tetrahydrodipicolinate + L-glutamate + H2O + H(+). The protein operates within amino-acid biosynthesis; L-lysine biosynthesis via DAP pathway; LL-2,6-diaminopimelate from (S)-tetrahydrodipicolinate (aminotransferase route): step 1/1. Involved in the synthesis of meso-diaminopimelate (m-DAP or DL-DAP), required for both lysine and peptidoglycan biosynthesis. Catalyzes the direct conversion of tetrahydrodipicolinate to LL-diaminopimelate. This chain is LL-diaminopimelate aminotransferase, found in Prochlorococcus marinus (strain MIT 9301).